The chain runs to 349 residues: Lachesin (349 aa).

Residues 1–18 (MDLRLYTIFVGFFSVVYA) form the signal peptide. Residues 22–127 (PTISYISQEQ…NKITAEVDLQ (106 aa)) form the Ig-like V-type domain. A disulfide bond links Cys-43 and Cys-110. Ig-like C2-type domains lie at 132 to 218 (PVIS…IAVE) and 222 to 315 (PPVI…VELF). An N-linked (GlcNAc...) asparagine glycan is attached at Asn-137. Disulfide bonds link Cys-154/Cys-201 and Cys-244/Cys-299. Gly-332 carries GPI-anchor amidated glycine lipidation. Positions 333–349 (DAAEISTSMALILISTI) are cleaved as a propeptide — removed in mature form.

In terms of processing, the N-terminus is blocked. As to expression, expressed by all neurogenic cells early, but only those cells that become neuroblasts continue to express it. Expressed by neuroblasts, ganglion mother cells and neurons early in their lives, but expression becomes restricted to a subset of neurons as development progresses. Expressed by sensory neurons as they delaminate from the body wall ectoderm. It is also present on growing axons of the CNS and PNS and becomes restricted to a subset of axons later in development.

The protein resides in the cell membrane. May play a role in early neuronal differentiation and axon outgrowth. The polypeptide is Lachesin (LAC) (Schistocerca americana (American grasshopper)).